Here is a 383-residue protein sequence, read N- to C-terminus: Acyl-CoA dehydrogenase, short-chain specific (383 aa).

The active-site Proton acceptor is the glutamate 367.

The protein belongs to the acyl-CoA dehydrogenase family. As to quaternary structure, homotetramer. FAD is required as a cofactor.

The enzyme catalyses butanoyl-CoA + oxidized [electron-transfer flavoprotein] + H(+) = (2E)-butenoyl-CoA + reduced [electron-transfer flavoprotein]. It catalyses the reaction a short-chain 2,3-saturated fatty acyl-CoA + oxidized [electron-transfer flavoprotein] + H(+) = a short-chain (2E)-enoyl-CoA + reduced [electron-transfer flavoprotein]. In terms of biological role, has an optimum specificity for 4-carbon length fatty acyl-CoAs. This Megasphaera elsdenii protein is Acyl-CoA dehydrogenase, short-chain specific.